We begin with the raw amino-acid sequence, 1036 residues long: Isoleucine--tRNA ligase (1036 aa).

Residues 46–56 (PFATGLPHYGH) carry the 'HIGH' region motif. Positions 589–593 (KMSKR) match the 'KMSKS' region motif. K592 is a binding site for ATP.

This sequence belongs to the class-I aminoacyl-tRNA synthetase family. IleS type 2 subfamily. In terms of assembly, monomer. Zn(2+) serves as cofactor.

The protein resides in the cytoplasm. The enzyme catalyses tRNA(Ile) + L-isoleucine + ATP = L-isoleucyl-tRNA(Ile) + AMP + diphosphate. Functionally, catalyzes the attachment of isoleucine to tRNA(Ile). As IleRS can inadvertently accommodate and process structurally similar amino acids such as valine, to avoid such errors it has two additional distinct tRNA(Ile)-dependent editing activities. One activity is designated as 'pretransfer' editing and involves the hydrolysis of activated Val-AMP. The other activity is designated 'posttransfer' editing and involves deacylation of mischarged Val-tRNA(Ile). This chain is Isoleucine--tRNA ligase, found in Chlamydia muridarum (strain MoPn / Nigg).